The chain runs to 536 residues: Testis-specific protein 10-interacting protein (536 aa).

Disordered stretches follow at residues 1 to 94 (MLNT…LFSS), 185 to 234 (SQGL…PGQG), and 246 to 305 (MEEE…FKGP). Residues 48 to 64 (SGDSLQSQSCQQQRSYS) show a composition bias toward low complexity. A compositionally biased stretch (basic residues) spans 71–83 (KERKPRRRNKKGR). Residues 375 to 451 (QAWEQQQLKE…LQGIQHRVQA (77 aa)) are a coiled coil. Positions 491 to 536 (GNAEGIPRKHRSYRSFGVEMESSPQSPPKTEPTSSQPGRHPSPTLD) are disordered.

The protein is Testis-specific protein 10-interacting protein (Tsga10ip) of Rattus norvegicus (Rat).